We begin with the raw amino-acid sequence, 417 residues long: Phosphoglycerate kinase 1 (417 aa).

S2 carries the post-translational modification N-acetylserine. 2 positions are modified to phosphoserine: S2 and S4. K6 carries the N6-succinyllysine modification. K11 carries the N6-acetyllysine modification. (2R)-3-phosphoglycerate is bound by residues V23, D24, F25, N26, Q38, and R39. Residues 38–43 (QRIKAA) form a mitochondrial targeting region exposed following cis-trans isomerization by PIN1 and recognized by the TOM complex for mitochondrial translocation of the protein region. K48 is subject to N6-acetyllysine; alternate. An N6-succinyllysine; alternate modification is found at K48. 4 residues coordinate (2R)-3-phosphoglycerate: S62, H63, G65, and R66. At K75 the chain carries N6-acetyllysine. At Y76 the chain carries Phosphotyrosine. 2 positions are modified to N6-acetyllysine: K86 and K91. K97 carries the post-translational modification N6-acetyllysine; alternate. K97 bears the N6-(2-hydroxyisobutyryl)lysine; alternate mark. (2R)-3-phosphoglycerate contacts are provided by L122 and R123. Position 131 is an N6-acetyllysine; alternate (K131). K131 is subject to N6-malonyllysine; alternate. The residue at position 146 (K146) is an N6-acetyllysine. Residues H170 and R171 each coordinate (2R)-3-phosphoglycerate. At K191 the chain carries N6-succinyllysine. Phosphotyrosine is present on Y196. The residue at position 199 (K199) is an N6-acetyllysine. S203 carries the phosphoserine modification. G214 provides a ligand contact to ADP. G214 lines the CDP pocket. AMP is bound by residues A215 and K216. Residue A215 coordinates ATP. A215 contacts Mg(2+). An N6-(2-hydroxyisobutyryl)lysine modification is found at K216. Mg(2+) contacts are provided by A218 and D219. Residue D219 coordinates CDP. An AMP-binding site is contributed by K220. Residue K220 coordinates ATP. An N6-(2-hydroxyisobutyryl)lysine modification is found at K220. Position 238 (G238) interacts with ADP. G238 is a CDP binding site. G239 provides a ligand contact to AMP. G239 contacts ATP. Residues K267 and K291 each carry the N6-acetyllysine modification. G313 contributes to the AMP binding site. Residue G313 coordinates ATP. An N6-(2-hydroxyisobutyryl)lysine modification is found at K323. CDP contacts are provided by G338, V340, and F343. F343 contacts ADP. E344 lines the AMP pocket. E344 serves as a coordination point for ATP. Phosphoserine is present on S354. An N6-acetyllysine modification is found at K361. Positions 375 and 376 each coordinate ATP. D375 is a binding site for Mg(2+).

The protein belongs to the phosphoglycerate kinase family. Monomer. Interacts with kinase MAPK1/ERK2; the interaction is direct, occurs under hypoxic conditions, and promotes its interaction with PIN1. Interacts with peptidyl-prolyl cis-trans isomerase PIN1; the interaction is direct, occurs under hypoxic conditions, and targets the protein to the mitochondrion by promoting interactions with the TOM complex. Interacts with mitochondrial circRNA mcPGK1 (via its 2nd stem-loop); the interaction is direct and targets the protein to the mitochondrion by promoting interactions with the TOM complex. Interacts with pyruvate dehydrogenase kinase PDK1; the interaction is direct, occurs under hypoxic conditions and leads to PDK1-mediated inhibition of pyruvate dehydrogenase complex activity. It depends on Mg(2+) as a cofactor. In terms of processing, phosphorylated at Ser-203 by MAPK1/ERK2 under hypoxic conditions, which promotes its mitochondrial targeting.

It localises to the cytoplasm. Its subcellular location is the cytosol. The protein localises to the mitochondrion matrix. It catalyses the reaction (2R)-3-phosphoglycerate + ATP = (2R)-3-phospho-glyceroyl phosphate + ADP. It carries out the reaction L-seryl-[protein] + ATP = O-phospho-L-seryl-[protein] + ADP + H(+). Its pathway is carbohydrate degradation; glycolysis; pyruvate from D-glyceraldehyde 3-phosphate: step 2/5. Functionally, catalyzes one of the two ATP producing reactions in the glycolytic pathway via the reversible conversion of 1,3-diphosphoglycerate to 3-phosphoglycerate. Both L- and D- forms of purine and pyrimidine nucleotides can be used as substrates, but the activity is much lower on pyrimidines. In addition to its role as a glycolytic enzyme, it seems that PGK-1 acts as a polymerase alpha cofactor protein (primer recognition protein). Acts as a protein kinase when localized to the mitochondrion where it phosphorylates pyruvate dehydrogenase kinase PDK1 to inhibit pyruvate dehydrogenase complex activity and suppress the formation of acetyl-coenzyme A from pyruvate, and consequently inhibit oxidative phosphorylation and promote glycolysis. May play a role in sperm motility. The sequence is that of Phosphoglycerate kinase 1 (Pgk1) from Rattus norvegicus (Rat).